The chain runs to 460 residues: Argininosuccinate lyase (460 aa).

It belongs to the lyase 1 family. Argininosuccinate lyase subfamily.

It localises to the cytoplasm. It catalyses the reaction 2-(N(omega)-L-arginino)succinate = fumarate + L-arginine. It participates in amino-acid biosynthesis; L-arginine biosynthesis; L-arginine from L-ornithine and carbamoyl phosphate: step 3/3. This chain is Argininosuccinate lyase, found in Campylobacter jejuni (strain RM1221).